We begin with the raw amino-acid sequence, 81 residues long: Acyl carrier protein (81 aa).

In terms of domain architecture, Carrier spans 1–79; it reads MDREEILQKI…EAVDYVVEHQ (79 aa). S39 is modified (O-(pantetheine 4'-phosphoryl)serine).

This sequence belongs to the acyl carrier protein (ACP) family. Post-translationally, 4'-phosphopantetheine is transferred from CoA to a specific serine of apo-ACP by AcpS. This modification is essential for activity because fatty acids are bound in thioester linkage to the sulfhydryl of the prosthetic group.

Its subcellular location is the cytoplasm. The protein operates within lipid metabolism; fatty acid biosynthesis. Functionally, carrier of the growing fatty acid chain in fatty acid biosynthesis. The sequence is that of Acyl carrier protein from Rubrobacter xylanophilus (strain DSM 9941 / JCM 11954 / NBRC 16129 / PRD-1).